Reading from the N-terminus, the 188-residue chain is Trafficking protein particle complex subunit 5 (188 aa).

Ser-10 is subject to Phosphoserine.

This sequence belongs to the TRAPP small subunits family. BET3 subfamily. As to quaternary structure, component of the multisubunit TRAPP (transport protein particle) complex, which includes at least TRAPPC2, TRAPPC2L, TRAPPC3, TRAPPC3L, TRAPPC4, TRAPPC5, TRAPPC8, TRAPPC9, TRAPPC10, TRAPPC11 and TRAPPC12.

It localises to the golgi apparatus. The protein localises to the cis-Golgi network. The protein resides in the endoplasmic reticulum. May play a role in vesicular transport from endoplasmic reticulum to Golgi. The polypeptide is Trafficking protein particle complex subunit 5 (TRAPPC5) (Bos taurus (Bovine)).